Consider the following 692-residue polypeptide: Elongation factor G 2 (692 aa).

The 276-residue stretch at Lys-8–Leu-283 folds into the tr-type G domain. GTP contacts are provided by residues Ala-17–Thr-24, Asp-81–His-85, and Asn-135–Asp-138.

Belongs to the TRAFAC class translation factor GTPase superfamily. Classic translation factor GTPase family. EF-G/EF-2 subfamily.

The protein localises to the cytoplasm. Its function is as follows. Catalyzes the GTP-dependent ribosomal translocation step during translation elongation. During this step, the ribosome changes from the pre-translocational (PRE) to the post-translocational (POST) state as the newly formed A-site-bound peptidyl-tRNA and P-site-bound deacylated tRNA move to the P and E sites, respectively. Catalyzes the coordinated movement of the two tRNA molecules, the mRNA and conformational changes in the ribosome. The polypeptide is Elongation factor G 2 (Desulfotalea psychrophila (strain LSv54 / DSM 12343)).